The sequence spans 363 residues: p21-activated protein kinase-interacting protein 1-like (363 aa).

WD repeat units lie at residues 38 to 75 (AHTASVSVLAVNNRFVATGSRDETIQIYDMKKKVEHGA), 78 to 116 (HHNGTITCLEFYGNTHLLSGAEDGLICVWNTKKWECQQT), 119 to 158 (AHKGQVLSLSIHPSGKLALSVGTDKTLRTWNLVEGRSAFI), 200 to 238 (NNPKRISSAQFITDALIAVAGDEEVIRLYDTASQKCVCE), and 241 to 282 (AHEN…VQTS). The tract at residues 309–363 (KEKSNTAVTASAVKDCDRPKKKKAQNETTDKEASETQVVHKKRKPETKQKKKKPS) is disordered. A compositionally biased stretch (basic and acidic residues) spans 322–342 (KDCDRPKKKKAQNETTDKEAS). Positions 347–363 (VHKKRKPETKQKKKKPS) are enriched in basic residues.

It is found in the nucleus. The protein localises to the nucleolus. Its function is as follows. Negatively regulates the PAK1 kinase. PAK1 is a member of the PAK kinase family, which has been shown to play a positive role in the regulation of signaling pathways involving MAPK8 and RELA. PAK1 exists as an inactive homodimer, which is activated by binding of small GTPases such as CDC42 to an N-terminal regulatory domain. PAK1IP1 also binds to the N-terminus of PAK1, and inhibits the specific activation of PAK1 by CDC42. May be involved in ribosomal large subunit assembly. In Xenopus laevis (African clawed frog), this protein is p21-activated protein kinase-interacting protein 1-like (pak1ip1).